Consider the following 368-residue polypeptide: Zinc finger protein 24 (368 aa).

Lys-22 is covalently cross-linked (Glycyl lysine isopeptide (Lys-Gly) (interchain with G-Cter in SUMO2)). A Glycyl lysine isopeptide (Lys-Gly) (interchain with G-Cter in SUMO1); alternate cross-link involves residue Lys-27. Residue Lys-27 forms a Glycyl lysine isopeptide (Lys-Gly) (interchain with G-Cter in SUMO2); alternate linkage. In terms of domain architecture, SCAN box spans Arg-52–Leu-134. Phosphoserine is present on residues Ser-132 and Ser-142. Residues Lys-147, Lys-177, and Lys-236 each participate in a glycyl lysine isopeptide (Lys-Gly) (interchain with G-Cter in SUMO2) cross-link. A C2H2-type 1 zinc finger spans residues His-251–His-273. The interval His-251–His-301 is necessary and sufficient for nuclear localization. Ser-274 carries the phosphoserine modification. Glycyl lysine isopeptide (Lys-Gly) (interchain with G-Cter in SUMO2) cross-links involve residues Lys-277 and Lys-286. 3 C2H2-type zinc fingers span residues Tyr-279–His-301, Tyr-307–His-329, and Tyr-335–His-357. Position 292 is a phosphoserine (Ser-292). Residue Tyr-335 is modified to Phosphotyrosine. Glycyl lysine isopeptide (Lys-Gly) (interchain with G-Cter in SUMO2) cross-links involve residues Lys-361 and Lys-367.

Belongs to the krueppel C2H2-type zinc-finger protein family. In terms of processing, sumoylated.

Its subcellular location is the nucleus. Transcription factor required for myelination of differentiated oligodendrocytes. Required for the conversion of oligodendrocytes from the premyelinating to the myelinating state. In the developing central nervous system (CNS), involved in the maintenance in the progenitor stage by promoting the cell cycle. Specifically binds to the 5'-TCAT-3' DNA sequence. Has transcription repressor activity in vitro. The chain is Zinc finger protein 24 (ZNF24) from Pan troglodytes (Chimpanzee).